We begin with the raw amino-acid sequence, 749 residues long: MIKNYGDRYHLIDKKALEDKKLDKDQLVEFVRTSGISDIGKNYNIVSIIGSQSTGKSTLLNQLFGTKFDVQNRQQSVGQTTVGIWLSKDVQNNVVVLDVEGSDSVERKSGENMVENQTALMALAMSHCFIINVFLNALGQHTSCQLSIIKIIMQQNLKLFQQDTVKHIIFVVRDWDEDANYEEASRRLNGYLLNIWNEIPKPDHYKETDFHQLFSVQVVTLVYYKMKKEFIEQTNDLHAKLSNQQDPNFIFKDFDYEKNVRWSDMPQYLSNIWEVISNNKDLNLPNEKILISNMRCQQIKLEALDGVKQLNEDLQNRVRTKLVDNFAQECQTIMNLAFKLYDKDARDYHIEVYKEKEKELKDELVNRFYTYFQKQTEQLKQHYMNTLTENLETLKRESIYNLPDKLNELDLFKLQFEEQLAKSVIQKGLWQEEDHIRYFRQQFDNQLKAFVEAQLATFKQQLDNIIKSECDKIVSSQVLNISSKFWQQIESDYYAMISEKYQKYEVLLTGLRVQQKQIEDYLNKFEEDSFHNLKQVIAVASGRFKDQLFQQFKAQFVRAPDGQPRNWQKLTEEEIFHCYTDARDKVFQLLDSLRIRKIKFIRQQVVLKKKAQTLIISSSQKVQYQISSDADSDDVVLNDVFYTQVKMQLAEDIDVQYQDAIQKHKQDFLQNIPKPFWFLLLFFMYDDVLRWMGNPLFLYPILIILCFVGFCIAIGLHSLPKLAFQWVFRTLNQAVIPIIFGGISKLKGS.

The Cytoplasmic segment spans residues 1–671; it reads MIKNYGDRYH…QKHKQDFLQN (671 aa). The 226-residue stretch at 40–265 folds into the GB1/RHD3-type G domain; that stretch reads GKNYNIVSII…YEKNVRWSDM (226 aa). Residue 50–57 participates in GTP binding; that stretch reads GSQSTGKS. Residues 445 to 465 adopt a coiled-coil conformation; the sequence is NQLKAFVEAQLATFKQQLDNI. A helical membrane pass occupies residues 672–692; it reads IPKPFWFLLLFFMYDDVLRWM. Over 693 to 695 the chain is Lumenal; the sequence is GNP. The chain crosses the membrane as a helical span at residues 696-716; that stretch reads LFLYPILIILCFVGFCIAIGL. Over 717-749 the chain is Cytoplasmic; that stretch reads HSLPKLAFQWVFRTLNQAVIPIIFGGISKLKGS.

Belongs to the TRAFAC class dynamin-like GTPase superfamily. GB1/RHD3 GTPase family. RHD3 subfamily.

The protein localises to the endoplasmic reticulum membrane. Functionally, probable GTP-binding protein that may be involved in cell development. The sequence is that of Protein SEY1 homolog 2 from Paramecium tetraurelia.